The sequence spans 290 residues: UPF0761 membrane protein YihY (290 aa).

Transmembrane regions (helical) follow at residues 44–64 (LLSL…FPMF), 104–124 (VGAC…DSAL), 140–160 (FAVY…SLAI), 183–203 (IFPL…VPTI), 210–230 (AIVG…GFAL), and 244–264 (VLAV…IVLL).

It belongs to the UPF0761 family.

It localises to the cell inner membrane. The sequence is that of UPF0761 membrane protein YihY from Escherichia coli O139:H28 (strain E24377A / ETEC).